The chain runs to 194 residues: dCTP deaminase, dUMP-forming (194 aa).

Residues 104 to 109 (RSSLGR), D122, 130 to 132 (TLE), Q151, Y165, K172, and Q176 each bind dCTP. Residue E132 is the Proton donor/acceptor of the active site.

The protein belongs to the dCTP deaminase family. Homotrimer.

The catalysed reaction is dCTP + 2 H2O = dUMP + NH4(+) + diphosphate. The protein operates within pyrimidine metabolism; dUMP biosynthesis; dUMP from dCTP: step 1/1. Its function is as follows. Bifunctional enzyme that catalyzes both the deamination of dCTP to dUTP and the hydrolysis of dUTP to dUMP without releasing the toxic dUTP intermediate. The polypeptide is dCTP deaminase, dUMP-forming (Dictyoglomus thermophilum (strain ATCC 35947 / DSM 3960 / H-6-12)).